The chain runs to 509 residues: Steroid 17-alpha-hydroxylase/17,20 lyase (509 aa).

N202 contacts substrate. Residue C442 participates in heme binding.

The protein belongs to the cytochrome P450 family. Requires heme as cofactor.

It is found in the endoplasmic reticulum membrane. The protein resides in the microsome membrane. It catalyses the reaction a C21-steroid + reduced [NADPH--hemoprotein reductase] + O2 = a 17alpha-hydroxy-C21-steroid + oxidized [NADPH--hemoprotein reductase] + H2O + H(+). It carries out the reaction progesterone + reduced [NADPH--hemoprotein reductase] + O2 = 17alpha-hydroxyprogesterone + oxidized [NADPH--hemoprotein reductase] + H2O + H(+). The catalysed reaction is pregnenolone + reduced [NADPH--hemoprotein reductase] + O2 = 17alpha-hydroxypregnenolone + oxidized [NADPH--hemoprotein reductase] + H2O + H(+). The enzyme catalyses 17alpha-hydroxyprogesterone + reduced [NADPH--hemoprotein reductase] + O2 = androst-4-ene-3,17-dione + acetate + oxidized [NADPH--hemoprotein reductase] + H2O + 2 H(+). It catalyses the reaction 17alpha-hydroxyprogesterone + reduced [NADPH--hemoprotein reductase] + O2 = 16alpha,17alpha-dihydroxyprogesterone + oxidized [NADPH--hemoprotein reductase] + H2O + H(+). It carries out the reaction 16alpha,17alpha-dihydroxyprogesterone + reduced [NADPH--hemoprotein reductase] + O2 = 6beta,16alpha,17alpha-trihydroxyprogesterone + oxidized [NADPH--hemoprotein reductase] + H2O + H(+). The catalysed reaction is 17alpha-hydroxypregnenolone + reduced [NADPH--hemoprotein reductase] + O2 = 3beta-hydroxyandrost-5-en-17-one + acetate + oxidized [NADPH--hemoprotein reductase] + H2O + 2 H(+). The enzyme catalyses 16alpha,17alpha-dihydroxypregnenolone + reduced [NADPH--hemoprotein reductase] + O2 = 3beta,16alpha-dihydroxy-androst-5-en-17-one + acetate + oxidized [NADPH--hemoprotein reductase] + H2O + 2 H(+). It catalyses the reaction 3beta-hydroxyandrost-5-en-17-one + reduced [NADPH--hemoprotein reductase] + O2 = 3beta,16alpha-dihydroxy-androst-5-en-17-one + oxidized [NADPH--hemoprotein reductase] + H2O + H(+). It carries out the reaction androst-4-ene-3,17-dione + reduced [NADPH--hemoprotein reductase] + O2 = 16alpha-hydroxyandrost-4-ene-3,17-dione + oxidized [NADPH--hemoprotein reductase] + H2O + H(+). It functions in the pathway steroid hormone biosynthesis. The protein operates within steroid biosynthesis; glucocorticoid biosynthesis. Regulated predominantly by intracellular cAMP levels. The 17,20-lyase activity is stimulated by cytochrome b5, which acts as an allosteric effector increasing the Vmax of the lyase activity. In terms of biological role, a cytochrome P450 monooxygenase involved in corticoid and androgen biosynthesis. Catalyzes 17-alpha hydroxylation of C21 steroids, which is common for both pathways. A second oxidative step, required only for androgen synthesis, involves an acyl-carbon cleavage. The 17-alpha hydroxy intermediates, as part of adrenal glucocorticoids biosynthesis pathway, are precursors of cortisol. Hydroxylates steroid hormones, pregnenolone and progesterone to form 17-alpha hydroxy metabolites, followed by the cleavage of the C17-C20 bond to form C19 steroids, dehydroepiandrosterone (DHEA) and androstenedione. Has 16-alpha hydroxylase activity. Catalyzes 16-alpha hydroxylation of 17-alpha hydroxy pregnenolone, followed by the cleavage of the C17-C20 bond to form 16-alpha-hydroxy DHEA. Also 16-alpha hydroxylates androgens, relevant for estriol synthesis. Mechanistically, uses molecular oxygen inserting one oxygen atom into a substrate, and reducing the second into a water molecule, with two electrons provided by NADPH via cytochrome P450 reductase (CPR; NADPH-ferrihemoprotein reductase). This Bison bison (American bison) protein is Steroid 17-alpha-hydroxylase/17,20 lyase (CYP17A1).